Reading from the N-terminus, the 334-residue chain is Dihydroorotate dehydrogenase (quinone) (334 aa).

FMN is bound by residues 59–63 (AGLDK) and Thr-83. A substrate-binding site is contributed by Lys-63. Substrate is bound at residue 108–112 (NRMGF). 2 residues coordinate FMN: Asn-136 and Asn-169. Asn-169 contacts substrate. Ser-172 acts as the Nucleophile in catalysis. Residue Asn-174 participates in substrate binding. Residues Lys-214 and Thr-242 each coordinate FMN. Residue 243–244 (NT) participates in substrate binding. FMN is bound by residues Gly-265, Gly-294, and 315 to 316 (YS).

It belongs to the dihydroorotate dehydrogenase family. Type 2 subfamily. As to quaternary structure, monomer. FMN serves as cofactor.

Its subcellular location is the cell membrane. It catalyses the reaction (S)-dihydroorotate + a quinone = orotate + a quinol. Its pathway is pyrimidine metabolism; UMP biosynthesis via de novo pathway; orotate from (S)-dihydroorotate (quinone route): step 1/1. Functionally, catalyzes the conversion of dihydroorotate to orotate with quinone as electron acceptor. In Acinetobacter baylyi (strain ATCC 33305 / BD413 / ADP1), this protein is Dihydroorotate dehydrogenase (quinone).